Reading from the N-terminus, the 895-residue chain is Cellulose 1,4-beta-cellobiosidase (895 aa).

An N-terminal signal peptide occupies residues 1–27 (MNFRRMLCAAIVLTIVLSIMLPSTVFA). Residues 40–199 (NDLLYERTFD…YLDDVSLYDP (160 aa)) enclose the CBM-cenC domain. A linker region spans residues 199-240 (PRFVKPVEYVLPQPDVRVNQVGYLPFAKKYATVVSSSTSPLK). A catalytic region spans residues 241–815 (WQLLNSANQV…WVTAYLDEID (575 aa)). Asp-386 functions as the Nucleophile in the catalytic mechanism. Active-site residues include His-737, Asp-786, and Glu-795. Positions 828-894 (PEVIYGDCNG…ILKEIDVLPH (67 aa)) constitute a Dockerin domain.

It belongs to the glycosyl hydrolase 9 (cellulase E) family.

It is found in the secreted. The enzyme catalyses Hydrolysis of (1-&gt;4)-beta-D-glucosidic linkages in cellulose and cellotetraose, releasing cellobiose from the non-reducing ends of the chains.. With respect to regulation, inhibited by cellobiose. This is Cellulose 1,4-beta-cellobiosidase (celK) from Acetivibrio thermocellus (Hungateiclostridium thermocellum).